Reading from the N-terminus, the 215-residue chain is Glutathione S-transferase D6 (215 aa).

A GST N-terminal domain is found at 1–80 (MDLYNMSGSP…YLVEQYGKDD (80 aa)). Glutathione-binding positions include S9, 50–52 (HTI), and 64–66 (ETR). The region spanning 86–206 (DPQKQALINQ…LARIQSAKKF (121 aa)) is the GST C-terminal domain.

Belongs to the GST superfamily. Delta family. Homodimer.

It carries out the reaction RX + glutathione = an S-substituted glutathione + a halide anion + H(+). Conjugation of reduced glutathione to a wide number of exogenous and endogenous hydrophobic electrophiles. May be involved in detoxification. The protein is Glutathione S-transferase D6 of Drosophila melanogaster (Fruit fly).